The sequence spans 1066 residues: Cytoplasmic dynein 2 intermediate chain 1 (1066 aa).

Disordered stretches follow at residues L22–R366 and Y381–L408. S30 carries the phosphoserine modification. 5 stretches are compositionally biased toward basic and acidic residues: residues S30 to R135, E147 to E171, D180 to H256, G264 to G308, and N316 to G336. A Phosphoserine modification is found at S247. Acidic residues-rich tracts occupy residues E351 to L362 and Y381 to N397. Over residues P399 to L408 the composition is skewed to basic and acidic residues. Residues A473–R552 are binding to the DYNLT2B-DYNLT1/DYNLT3 dimer. WD repeat units lie at residues I694–Y734, V775–I821, I907–Q947, and T952–V992.

The protein belongs to the dynein light intermediate chain family. In terms of assembly, intermediate chain of the cytoplasmic dynein complex 2, a multisubunit complex, composed at least of eleven different proteins. The cytoplasmic dynein 2 complex consists of two catalytic heavy chains (HCs) and a number of non-catalytic subunits presented by intermediate chains (ICs), light intermediate chains (LICs) and light chains (LCs). Among them, a heavy chain (DYNC2H1), two intermediate chains (DYNC2I2 and DYNC2I1), a light intermediate chain (DYNC2LI1), and a light chain (DYNLT2B) are unique to the cytoplasmic dynein complex 2, but a subset of the light chains are also shared by dynein-1 and dynein-2 complexes. Interacts with DYNC2I2; their C-terminal domains each bind a copy of the heavy chain, and their extended N-terminal regions are held together by an array of light chain dimers. Interacts with DYNLT2B. Interacts (via the N-terminal half) with DYNLT2B-DYNLT1 dimer or with DYNLT2B-DYNLT3 dimer; this interaction is crucial for retrograde trafficking of ciliary proteins. As to expression, expressed in chondrocytes (at protein level).

The protein localises to the cell projection. The protein resides in the cilium. It is found in the cytoplasm. Its subcellular location is the cytoskeleton. It localises to the microtubule organizing center. The protein localises to the centrosome. Its function is as follows. Acts as one of several non-catalytic accessory components of the cytoplasmic dynein 2 complex (dynein-2 complex), a motor protein complex that drives the movement of cargos along microtubules within cilia and flagella in concert with the intraflagellar transport (IFT) system. DYNC2I1 plays a major role in retrograde ciliary protein trafficking in cilia and flagella. Also requires to maintain a functional transition zone. This chain is Cytoplasmic dynein 2 intermediate chain 1, found in Homo sapiens (Human).